The sequence spans 73 residues: UPF0346 protein LVIS_0790 (73 aa).

It belongs to the UPF0346 family.

The sequence is that of UPF0346 protein LVIS_0790 from Levilactobacillus brevis (strain ATCC 367 / BCRC 12310 / CIP 105137 / JCM 1170 / LMG 11437 / NCIMB 947 / NCTC 947) (Lactobacillus brevis).